We begin with the raw amino-acid sequence, 160 residues long: Outer membrane protein MT2024.1 (160 aa).

The signal sequence occupies residues 1-22 (MSWSRVIAYGLLPGLALALTCG).

It is found in the cell outer membrane. The protein is Outer membrane protein MT2024.1 of Mycobacterium tuberculosis (strain CDC 1551 / Oshkosh).